Here is a 238-residue protein sequence, read N- to C-terminus: 15,16-dihydrobiliverdin:ferredoxin oxidoreductase (238 aa).

The protein belongs to the HY2 family.

It catalyses the reaction 15,16-dihydrobiliverdin + oxidized 2[4Fe-4S]-[ferredoxin] = biliverdin IXalpha + reduced 2[4Fe-4S]-[ferredoxin] + 2 H(+). Its function is as follows. Catalyzes the two-electron reduction of biliverdin IX-alpha at the C15 methine bridge. The chain is 15,16-dihydrobiliverdin:ferredoxin oxidoreductase from Prochlorococcus marinus (strain MIT 9211).